The sequence spans 462 residues: Alkaline ceramidase TOD1 (462 aa).

Over 1-18 (MGKFITTTLSPPLYARSK) the chain is Cytoplasmic. A helical transmembrane segment spans residues 19-39 (LLCFSLLYLFSTIFLFLYVSL). Residues 40-462 (SRNQCIFRYS…CKNYLTDMWG (423 aa)) are Lumenal-facing. Residues asparagine 121, asparagine 132, and asparagine 449 are each glycosylated (N-linked (GlcNAc...) asparagine).

The protein belongs to the alkaline ceramidase family. Preferentially expressed in pollen grains, pollen tubes and silique guard cells, but barely detectable in roots, stems and leaves.

It is found in the golgi apparatus membrane. It carries out the reaction an N-acylsphing-4-enine + H2O = sphing-4-enine + a fatty acid. It functions in the pathway lipid metabolism. Functionally, endoplasmic reticulum ceramidase that catalyzes the hydrolysis of ceramides into sphingosine and free fatty acids at alkaline pH (e.g. pH 9.5). Inactive on phytoceramide. Involved in the regulation of turgor pressure in guard cells and pollen tubes. The chain is Alkaline ceramidase TOD1 from Arabidopsis thaliana (Mouse-ear cress).